The primary structure comprises 478 residues: MSLIDVLIVDDEEDIRNIIAAILKDEGFNPKVAANSTQALKILAEKPVSAVILDIWLQGSEMDGLGILEVIKKRYPLMPVIIISGHGTIETAVNAIKMGAYDYIEKPFNNDKLVILLKRACEVTKLKRENIDLKSKVIDKTELVGNSTITLKYKAEIDKAASSSSRIMIHGKVGSGKELTARLIHKKSKRVNNLFIIFSPTCMTLEKINQELFGEAEKQESNNNSNKRPTILEFANNGTLYIDEVSNIPVPIQIKLLKFLKDHTIKKPCGKIVKVDIKIITGTSKNIQEEVNNGRFLEDLYYRLNVSSLKVPSLFERKEDIPLLVKYFVKQLSKFSGLKERVFADETIAALQSYEWPGNIRQLRNVVEWTLIMNPITSGNNEIIKPYMIPSEILANSVNLTKLEDSFDMLSMPLREAREVFERQYLSAQMSRFNNNILKTSSFVGMERSALHRKLKLLSLHIPPTGRINEEEYEEANA.

The 117-residue stretch at 5-121 folds into the Response regulatory domain; sequence DVLIVDDEED…KLVILLKRAC (117 aa). Residue aspartate 54 is modified to 4-aspartylphosphate. Residues 143 to 372 form the Sigma-54 factor interaction domain; the sequence is LVGNSTITLK…LRNVVEWTLI (230 aa). Residues 171-178 and 235-244 each bind ATP; these read GKVGSGKE and ANNGTLYIDE.

Its function is as follows. Member of the two-component regulatory system RBE_0312/RBE_0470. This chain is Putative response regulator NtrX-like, found in Rickettsia bellii (strain RML369-C).